The primary structure comprises 222 residues: Protein-L-isoaspartate O-methyltransferase (222 aa).

The active site involves Ser-65.

Belongs to the methyltransferase superfamily. L-isoaspartyl/D-aspartyl protein methyltransferase family.

Its subcellular location is the cytoplasm. It catalyses the reaction [protein]-L-isoaspartate + S-adenosyl-L-methionine = [protein]-L-isoaspartate alpha-methyl ester + S-adenosyl-L-homocysteine. In terms of biological role, catalyzes the methyl esterification of L-isoaspartyl residues in peptides and proteins that result from spontaneous decomposition of normal L-aspartyl and L-asparaginyl residues. It plays a role in the repair and/or degradation of damaged proteins. The polypeptide is Protein-L-isoaspartate O-methyltransferase (Chlorobium luteolum (strain DSM 273 / BCRC 81028 / 2530) (Pelodictyon luteolum)).